Here is a 533-residue protein sequence, read N- to C-terminus: Beta-1,4-mannosyl-glycoprotein 4-beta-N-acetylglucosaminyltransferase (533 aa).

Residues 1–7 (MKMRRYK) are Cytoplasmic-facing. A helical; Signal-anchor for type II membrane protein membrane pass occupies residues 8-23 (LFLMFCMAGLCLISFL). The Lumenal segment spans residues 24–533 (HFFKTLSYVT…ARGKLDEAEV (510 aa)). Residues 119 to 158 (KPGTKMLERPPPGRPEEKPEGANGSSARRPPRYLLSARER) form a disordered region. N-linked (GlcNAc...) asparagine glycans are attached at residues Asn141, Asn241, Asn259, and Asn397. Residues 507–533 (STAAGGWRHRGPEGRPPARGKLDEAEV) form a disordered region.

The protein belongs to the glycosyltransferase 17 family. In terms of assembly, interacts with MGAT4D.

Its subcellular location is the golgi apparatus membrane. The enzyme catalyses N(4)-{beta-D-GlcNAc-(1-&gt;2)-alpha-D-Man-(1-&gt;3)-[beta-D-GlcNAc-(1-&gt;2)-alpha-D-Man-(1-&gt;6)]-beta-D-Man-(1-&gt;4)-beta-D-GlcNAc-(1-&gt;4)-beta-D-GlcNAc}-L-asparaginyl-[protein] + UDP-N-acetyl-alpha-D-glucosamine = N(4)-{beta-D-GlcNAc-(1-&gt;2)-alpha-D-Man-(1-&gt;3)-[beta-D-GlcNAc-(1-&gt;4)]-[beta-D-GlcNAc-(1-&gt;2)-alpha-D-Man-(1-&gt;6)]-beta-D-Man-(1-&gt;4)-beta-D-GlcNAc-(1-&gt;4)-beta-D-GlcNAc}-L-asparaginyl-[protein] + UDP + H(+). The protein operates within protein modification; protein glycosylation. Functionally, it is involved in the regulation of the biosynthesis and biological function of glycoprotein oligosaccharides. Catalyzes the addition of N-acetylglucosamine in beta 1-4 linkage to the beta-linked mannose of the trimannosyl core of N-linked sugar chains, called bisecting N-acetylglucosamine (GlcNAc). It is one of the most important enzymes involved in the regulation of the biosynthesis of glycoprotein oligosaccharides. The addition of this bisecting GlcNAc residue alters not only the composition, but also the conformation of the N-glycan. The introduction of the bisecting GlcNAc residue results in the suppression of further processing and elongation of N-glycans, precluding the formation of beta-1,6 GlcNAc branching, catalyzed by MGAT5 since it is unable to use the bisected oligosaccharide as a substrate. Addition of bisecting N-acetylglucosamine to CDH1/E-cadherin modulates CDH1 cell membrane location. Inhibits NeuAc-alpha-2,3-Gal-beta-1,4-GlcNAc- formation which modulates sialylation levels and plays a role in cell migration regulation. In brain, addition of bisecting N-acetylglucosamine to BACE1 blocks its lysosomal targeting in response to oxidative stress and further degradation which increases its location to early endosome and the APP cleavage. In Homo sapiens (Human), this protein is Beta-1,4-mannosyl-glycoprotein 4-beta-N-acetylglucosaminyltransferase.